A 126-amino-acid polypeptide reads, in one-letter code: UPF0102 protein TP_0913 (126 aa).

The protein belongs to the UPF0102 family.

This is UPF0102 protein TP_0913 from Treponema pallidum (strain Nichols).